The chain runs to 312 residues: Ribosomal RNA small subunit methyltransferase H (312 aa).

Residues 35-37, Asp-55, Phe-79, Asp-101, and Gln-108 contribute to the S-adenosyl-L-methionine site; that span reads GGH.

It belongs to the methyltransferase superfamily. RsmH family.

The protein resides in the cytoplasm. The catalysed reaction is cytidine(1402) in 16S rRNA + S-adenosyl-L-methionine = N(4)-methylcytidine(1402) in 16S rRNA + S-adenosyl-L-homocysteine + H(+). Its function is as follows. Specifically methylates the N4 position of cytidine in position 1402 (C1402) of 16S rRNA. This Buchnera aphidicola subsp. Schizaphis graminum (strain Sg) protein is Ribosomal RNA small subunit methyltransferase H.